Here is a 416-residue protein sequence, read N- to C-terminus: UDP-N-acetylglucosamine 1-carboxyvinyltransferase (416 aa).

22 to 23 (KN) contributes to the phosphoenolpyruvate binding site. R91 is a UDP-N-acetyl-alpha-D-glucosamine binding site. The active-site Proton donor is C115. Position 115 is a 2-(S-cysteinyl)pyruvic acid O-phosphothioketal (C115). UDP-N-acetyl-alpha-D-glucosamine contacts are provided by residues 120 to 124 (RPIDL), D305, and I327.

This sequence belongs to the EPSP synthase family. MurA subfamily.

The protein resides in the cytoplasm. The catalysed reaction is phosphoenolpyruvate + UDP-N-acetyl-alpha-D-glucosamine = UDP-N-acetyl-3-O-(1-carboxyvinyl)-alpha-D-glucosamine + phosphate. Its pathway is cell wall biogenesis; peptidoglycan biosynthesis. Cell wall formation. Adds enolpyruvyl to UDP-N-acetylglucosamine. The polypeptide is UDP-N-acetylglucosamine 1-carboxyvinyltransferase (Buchnera aphidicola subsp. Acyrthosiphon pisum (strain 5A)).